The sequence spans 387 residues: Putative F-box protein At1g47800 (387 aa).

An F-box domain is found at 8–54 (LQSLDHIPIDVLFEILVKLPAKSVARFLCVSKVWATMIRGEVFIRSF).

In Arabidopsis thaliana (Mouse-ear cress), this protein is Putative F-box protein At1g47800.